A 614-amino-acid polypeptide reads, in one-letter code: Sulfite reductase [NADPH] flavoprotein alpha-component (614 aa).

Positions 79–217 constitute a Flavodoxin-like domain; that stretch reads LTIIFASQTG…AATEWRKQVL (139 aa). FMN contacts are provided by residues 85 to 90, 132 to 135, and 168 to 177; these read SQTGNA, STNG, and LGDSSYQFFC. Residues 249–463 enclose the FAD-binding FR-type domain; sequence EQPYTASLST…VEHNNNFKLP (215 aa). Residues T337, T371, 401-404, 419-421, Y425, and 434-437 contribute to the FAD site; these read RLYS, TVG, and GGAS. NADP(+)-binding positions include 534–535, 540–544, and D576; these read SR and KVYVQ. Y614 serves as a coordination point for FAD.

This sequence belongs to the NADPH-dependent sulphite reductase flavoprotein subunit CysJ family. In the N-terminal section; belongs to the flavodoxin family. It in the C-terminal section; belongs to the flavoprotein pyridine nucleotide cytochrome reductase family. Alpha(8)-beta(8). The alpha component is a flavoprotein, the beta component is a hemoprotein. FAD serves as cofactor. FMN is required as a cofactor.

The enzyme catalyses hydrogen sulfide + 3 NADP(+) + 3 H2O = sulfite + 3 NADPH + 4 H(+). It functions in the pathway sulfur metabolism; hydrogen sulfide biosynthesis; hydrogen sulfide from sulfite (NADPH route): step 1/1. In terms of biological role, component of the sulfite reductase complex that catalyzes the 6-electron reduction of sulfite to sulfide. This is one of several activities required for the biosynthesis of L-cysteine from sulfate. The flavoprotein component catalyzes the electron flow from NADPH -&gt; FAD -&gt; FMN to the hemoprotein component. This chain is Sulfite reductase [NADPH] flavoprotein alpha-component, found in Vibrio cholerae serotype O1 (strain ATCC 39315 / El Tor Inaba N16961).